We begin with the raw amino-acid sequence, 82 residues long: Small ribosomal subunit protein bS16 (82 aa).

Belongs to the bacterial ribosomal protein bS16 family.

In Gloeothece citriformis (strain PCC 7424) (Cyanothece sp. (strain PCC 7424)), this protein is Small ribosomal subunit protein bS16.